A 1595-amino-acid polypeptide reads, in one-letter code: A disintegrin and metalloproteinase with thrombospondin motifs 7 (1595 aa).

A signal peptide spans 1–20 (MHRGLNLLLILCALAPHVLG). A propeptide spanning residues 21 to 217 (PASGLPTEGR…QRQQKRRQQR (197 aa)) is cleaved from the precursor. 2 N-linked (GlcNAc...) asparagine glycosylation sites follow: asparagine 84 and asparagine 105. The interval 165 to 218 (PGHAQPHMVYKHKRSGQQDDSRTSGTCGVQGSPELKHQREHWEQRQQKRRQQRS) is disordered. Positions 189-196 (GTCGVQGS) match the Cysteine switch motif. Cysteine 191 is a binding site for Zn(2+). The segment covering 198 to 210 (ELKHQREHWEQRQ) has biased composition (basic and acidic residues). Residues 223–434 (KWVETLVVAD…GWGLCLDDRP (212 aa)) enclose the Peptidase M12B domain. Intrachain disulfides connect cysteine 299–cysteine 353, cysteine 328–cysteine 335, cysteine 347–cysteine 429, cysteine 386–cysteine 413, cysteine 456–cysteine 479, cysteine 467–cysteine 485, cysteine 474–cysteine 504, cysteine 498–cysteine 509, cysteine 532–cysteine 569, cysteine 536–cysteine 574, and cysteine 547–cysteine 559. Histidine 369 contributes to the Zn(2+) binding site. Residue glutamate 370 is part of the active site. Histidine 373 and histidine 379 together coordinate Zn(2+). The region spanning 444 to 519 (VLPGVLYDVN…VPEGFQPETV (76 aa)) is the Disintegrin domain. The region spanning 520–575 (DGGWSGWSAWSVCSRSCGVGVRSSERQCTQPVPKNKGKYCVGERKRYRLCNLQACP) is the TSP type-1 1 domain. Asparagine 619 carries N-linked (GlcNAc...) asparagine glycosylation. A spacer region spans residues 680–791 (HTVSRTFKEA…PGVHYKYTIQ (112 aa)). 3 TSP type-1 domains span residues 801–860 (PEFS…EPCP), 861–917 (ARWW…IPCY), and 922–975 (CPSS…QPCQ). Disordered regions lie at residues 989-1035 (GSSS…LDPP), 1077-1121 (PPHI…SHSP), 1179-1234 (REDT…LSPD), and 1255-1315 (KPVH…APTD). Composition is skewed to pro residues over residues 1005–1015 (QPVPRPSPASS) and 1079–1089 (HIRPTEPPSDS). Over residues 1220 to 1232 (SSPSNSTTQASLS) the composition is skewed to low complexity. Polar residues predominate over residues 1268-1280 (QIQTPHTEGTQSP). 4 consecutive TSP type-1 domains span residues 1320–1368 (KNAS…RHCH), 1371–1431 (PCAA…QPCL), 1433–1476 (WYTS…PCNT), and 1478–1538 (PCTQ…EDCE). A PLAC domain is found at 1541-1581 (EPSRCERDRLPFNFCETLRLLGRCQLPTIRAQCCRSCPPLS).

In terms of assembly, interacts with COMP. Requires Zn(2+) as cofactor. Post-translationally, glycosylated. Can be O-fucosylated by POFUT2 on a serine or a threonine residue found within the consensus sequence C1-X(2)-(S/T)-C2-G of the TSP type-1 repeat domains where C1 and C2 are the first and second cysteine residue of the repeat, respectively. Fucosylated repeats can then be further glycosylated by the addition of a beta-1,3-glucose residue by the glucosyltransferase, B3GALTL. Fucosylation mediates the efficient secretion of ADAMTS family members. Can also be C-glycosylated with one or two mannose molecules on tryptophan residues within the consensus sequence W-X-X-W of the TPRs. N- and C-glycosylations can also facilitate secretion. O-glycosylated proteoglycan; contains chondroitin sulfate. In terms of processing, may be cleaved by a furin endopeptidase. The precursor is sequentially processed. In terms of tissue distribution, detected in liver, ovary, kidney, testicle, lung and embryo.

It localises to the secreted. The protein resides in the extracellular space. Its subcellular location is the extracellular matrix. In terms of biological role, metalloprotease. Was previously shown to degrade COMP. However, a later study found no activity against COMP. The sequence is that of A disintegrin and metalloproteinase with thrombospondin motifs 7 (Adamts7) from Rattus norvegicus (Rat).